The chain runs to 79 residues: Aquaporin Z (79 aa).

2 consecutive transmembrane segments (helical) span residues Leu-4–Phe-24 and Ile-33–Val-53. The NPA 1 signature appears at Asn-62–Ala-64.

This sequence belongs to the MIP/aquaporin (TC 1.A.8) family. Homotetramer.

Its subcellular location is the cell membrane. The catalysed reaction is H2O(in) = H2O(out). Functionally, channel that permits osmotically driven movement of water in both directions. It is involved in the osmoregulation and in the maintenance of cell turgor during volume expansion in rapidly growing cells. It mediates rapid entry or exit of water in response to abrupt changes in osmolarity. This chain is Aquaporin Z, found in Flavobacterium johnsoniae (Cytophaga johnsonae).